Here is a 420-residue protein sequence, read N- to C-terminus: Threonine aspartase 1 (420 aa).

Residues 1–25 (MIMEKGMNSGEGLPSRSSQASAAKV) form a disordered region. T234 acts as the Nucleophile in catalysis.

This sequence belongs to the Ntn-hydrolase family. In terms of assembly, intramolecular proteolysis generates 2 subunits, alpha and beta, which reassemble through a non-covalent association to form the fully active enzyme.

Functionally, protease responsible for KMT2A/MLL1 and KMT2D/MLL2 processing and activation. Through substrate activation, it controls the expression of HOXA genes, and the expression of key cell cycle regulators including CCNA1, CCNB1, CCNE1 and CDKN2A. The sequence is that of Threonine aspartase 1 (Tasp1) from Mus musculus (Mouse).